A 276-amino-acid chain; its full sequence is Formamidopyrimidine-DNA glycosylase (276 aa).

Catalysis depends on Pro-2, which acts as the Schiff-base intermediate with DNA. The active-site Proton donor is Glu-3. Residue Lys-58 is the Proton donor; for beta-elimination activity of the active site. Residues His-94, Arg-112, and Arg-157 each coordinate DNA. The segment at 242–276 adopts an FPG-type zinc-finger fold; that stretch reads FVYDRAGEPCRVCGAPIRQIVQGQRSTYYCPNCQR. Arg-266 functions as the Proton donor; for delta-elimination activity in the catalytic mechanism.

This sequence belongs to the FPG family. As to quaternary structure, monomer. It depends on Zn(2+) as a cofactor.

The catalysed reaction is Hydrolysis of DNA containing ring-opened 7-methylguanine residues, releasing 2,6-diamino-4-hydroxy-5-(N-methyl)formamidopyrimidine.. It carries out the reaction 2'-deoxyribonucleotide-(2'-deoxyribose 5'-phosphate)-2'-deoxyribonucleotide-DNA = a 3'-end 2'-deoxyribonucleotide-(2,3-dehydro-2,3-deoxyribose 5'-phosphate)-DNA + a 5'-end 5'-phospho-2'-deoxyribonucleoside-DNA + H(+). Its function is as follows. Involved in base excision repair of DNA damaged by oxidation or by mutagenic agents. Acts as a DNA glycosylase that recognizes and removes damaged bases. Has a preference for oxidized purines, such as 7,8-dihydro-8-oxoguanine (8-oxoG). Has AP (apurinic/apyrimidinic) lyase activity and introduces nicks in the DNA strand. Cleaves the DNA backbone by beta-delta elimination to generate a single-strand break at the site of the removed base with both 3'- and 5'-phosphates. This is Formamidopyrimidine-DNA glycosylase from Burkholderia thailandensis (strain ATCC 700388 / DSM 13276 / CCUG 48851 / CIP 106301 / E264).